Here is a 134-residue protein sequence, read N- to C-terminus: Small ribosomal subunit protein uS11 (134 aa).

The tract at residues 115-134 is disordered; the sequence is TPIPHNGTRPPKKVLKRDLK. Positions 124-134 are enriched in basic residues; the sequence is PPKKVLKRDLK.

It belongs to the universal ribosomal protein uS11 family. Part of the 30S ribosomal subunit. Interacts with proteins S7 and S18. Binds to IF-3.

Its function is as follows. Located on the platform of the 30S subunit, it bridges several disparate RNA helices of the 16S rRNA. Forms part of the Shine-Dalgarno cleft in the 70S ribosome. The polypeptide is Small ribosomal subunit protein uS11 (Mycoplasma mobile (strain ATCC 43663 / 163K / NCTC 11711) (Mesomycoplasma mobile)).